We begin with the raw amino-acid sequence, 529 residues long: Cytochrome P450 monooxygenase oblE (529 aa).

A helical membrane pass occupies residues 38–58 (WQYIVTLLIAIITYDQVMYIW). Cys477 contributes to the heme binding site.

It belongs to the cytochrome P450 family. Requires heme as cofactor.

It is found in the membrane. It functions in the pathway secondary metabolite biosynthesis; terpenoid biosynthesis. In terms of biological role, cytochrome P450 monooxygenase; part of the gene cluster that mediates the biosynthesis of the sesterterpenes ophiobolins, fungal phytotoxins with potential anti-cancer activities. The first step of the pathway is performed by the sesterterpene synthase oblA that possesses both prenyl transferase and terpene cyclase activity, converting isopentenyl diphosphate and dimethylallyl diphosphate into geranylfarnesyl diphosphate (GFPP) and further converting GFPP into ophiobolin F, respectively. Other sesterterpenoids (C(25) terpenoids) are found as minor products of oblA. The cytochrome P450 monooxygenase oblB then catalyzes a four-step oxidative transformation of ophiobolin F to yield ophiobolin C. The function of the cytochrome P450 monooxygenase oblE has still to be determined. This is Cytochrome P450 monooxygenase oblE from Emericella variicolor (Aspergillus stellatus).